We begin with the raw amino-acid sequence, 100 residues long: NADH-quinone oxidoreductase subunit K (100 aa).

A run of 3 helical transmembrane segments spans residues 4 to 24 (LQHG…GLII), 28 to 48 (LLFM…AFVV), and 60 to 80 (VMYI…LALL).

This sequence belongs to the complex I subunit 4L family. NDH-1 is composed of 13 different subunits. Subunits NuoA, H, J, K, L, M, N constitute the membrane sector of the complex.

The protein localises to the cell inner membrane. It carries out the reaction a quinone + NADH + 5 H(+)(in) = a quinol + NAD(+) + 4 H(+)(out). Functionally, NDH-1 shuttles electrons from NADH, via FMN and iron-sulfur (Fe-S) centers, to quinones in the respiratory chain. The immediate electron acceptor for the enzyme in this species is believed to be ubiquinone. Couples the redox reaction to proton translocation (for every two electrons transferred, four hydrogen ions are translocated across the cytoplasmic membrane), and thus conserves the redox energy in a proton gradient. The protein is NADH-quinone oxidoreductase subunit K of Yersinia enterocolitica serotype O:8 / biotype 1B (strain NCTC 13174 / 8081).